Here is a 60-residue protein sequence, read N- to C-terminus: Acidic phospholipase A2 (60 aa).

Residues tyrosine 27, glycine 29, and glycine 31 each contribute to the Ca(2+) site. A disulfide bridge links cysteine 28 with cysteine 44. Residue histidine 47 is part of the active site. Aspartate 48 contacts Ca(2+).

The protein belongs to the phospholipase A2 family. Group II subfamily. D49 sub-subfamily. Monomer. Requires Ca(2+) as cofactor. Expressed by the venom gland.

It localises to the secreted. The enzyme catalyses a 1,2-diacyl-sn-glycero-3-phosphocholine + H2O = a 1-acyl-sn-glycero-3-phosphocholine + a fatty acid + H(+). Functionally, snake venom phospholipase A2 (PLA2) that exhibits an indirect hemolytic activity, a low myotoxicity, and induces edema. In addition, this enzyme has been shown to induce the release of some pro- and anti-inflammatory cytokines from human PBMC (IL12B, TNF-alpha, IL1B and IL6 but not variation has been observed for IL-8 and IL-10). PLA2 catalyzes the calcium-dependent hydrolysis of the 2-acyl groups in 3-sn-phosphoglycerides. In Bothrops leucurus (Whitetail lancehead), this protein is Acidic phospholipase A2.